A 345-amino-acid polypeptide reads, in one-letter code: tRNA N6-adenosine threonylcarbamoyltransferase (345 aa).

Fe cation-binding residues include His111 and His115. Residues 134–138 (LVSGG), Asp167, Gly180, Asp184, and Asn278 contribute to the substrate site. Residue Asp306 coordinates Fe cation.

It belongs to the KAE1 / TsaD family. Requires Fe(2+) as cofactor.

Its subcellular location is the cytoplasm. The catalysed reaction is L-threonylcarbamoyladenylate + adenosine(37) in tRNA = N(6)-L-threonylcarbamoyladenosine(37) in tRNA + AMP + H(+). Required for the formation of a threonylcarbamoyl group on adenosine at position 37 (t(6)A37) in tRNAs that read codons beginning with adenine. Is involved in the transfer of the threonylcarbamoyl moiety of threonylcarbamoyl-AMP (TC-AMP) to the N6 group of A37, together with TsaE and TsaB. TsaD likely plays a direct catalytic role in this reaction. This Cyanothece sp. (strain PCC 7425 / ATCC 29141) protein is tRNA N6-adenosine threonylcarbamoyltransferase.